The chain runs to 375 residues: 23S rRNA (uracil(747)-C(5))-methyltransferase RlmC (375 aa).

4 residues coordinate [4Fe-4S] cluster: Cys-3, Cys-11, Cys-14, and Cys-87. S-adenosyl-L-methionine contacts are provided by Gln-212, Phe-241, Glu-262, and Asn-307. Cys-334 (nucleophile) is an active-site residue.

This sequence belongs to the class I-like SAM-binding methyltransferase superfamily. RNA M5U methyltransferase family. RlmC subfamily.

The enzyme catalyses uridine(747) in 23S rRNA + S-adenosyl-L-methionine = 5-methyluridine(747) in 23S rRNA + S-adenosyl-L-homocysteine + H(+). Catalyzes the formation of 5-methyl-uridine at position 747 (m5U747) in 23S rRNA. This chain is 23S rRNA (uracil(747)-C(5))-methyltransferase RlmC, found in Salmonella arizonae (strain ATCC BAA-731 / CDC346-86 / RSK2980).